We begin with the raw amino-acid sequence, 116 residues long: Ribosome-binding factor A (116 aa).

It belongs to the RbfA family. In terms of assembly, monomer. Binds 30S ribosomal subunits, but not 50S ribosomal subunits or 70S ribosomes.

It localises to the cytoplasm. One of several proteins that assist in the late maturation steps of the functional core of the 30S ribosomal subunit. Associates with free 30S ribosomal subunits (but not with 30S subunits that are part of 70S ribosomes or polysomes). Required for efficient processing of 16S rRNA. May interact with the 5'-terminal helix region of 16S rRNA. The sequence is that of Ribosome-binding factor A from Levilactobacillus brevis (strain ATCC 367 / BCRC 12310 / CIP 105137 / JCM 1170 / LMG 11437 / NCIMB 947 / NCTC 947) (Lactobacillus brevis).